Here is a 309-residue protein sequence, read N- to C-terminus: Probable manganese-dependent inorganic pyrophosphatase (309 aa).

H9, D13, D15, D75, H97, and D149 together coordinate Mn(2+).

Belongs to the PPase class C family. Mn(2+) is required as a cofactor.

Its subcellular location is the cytoplasm. It carries out the reaction diphosphate + H2O = 2 phosphate + H(+). The sequence is that of Probable manganese-dependent inorganic pyrophosphatase from Bacillus cereus (strain 03BB102).